A 299-amino-acid chain; its full sequence is UDP-N-acetylenolpyruvoylglucosamine reductase (299 aa).

Residues 31-192 enclose the FAD-binding PCMH-type domain; that stretch reads VGGVAEVVFK…VDATFVGACG (162 aa). R172 is an active-site residue. S221 serves as the catalytic Proton donor. Residue E291 is part of the active site.

Belongs to the MurB family. It depends on FAD as a cofactor.

The protein resides in the cytoplasm. It carries out the reaction UDP-N-acetyl-alpha-D-muramate + NADP(+) = UDP-N-acetyl-3-O-(1-carboxyvinyl)-alpha-D-glucosamine + NADPH + H(+). The protein operates within cell wall biogenesis; peptidoglycan biosynthesis. Its function is as follows. Cell wall formation. The polypeptide is UDP-N-acetylenolpyruvoylglucosamine reductase (Anaplasma marginale (strain St. Maries)).